Reading from the N-terminus, the 664-residue chain is Macoilin (664 aa).

4 helical membrane passes run 28–48 (TFLYLKFLVVWALVLLADFVL), 75–95 (AFSVFFVCVAFTSNIICLLFI), 120–140 (VCLPTVSLWILFVYIEAAIRF), and 154–174 (FAAHCIGYPVVTLGFGFKSYV). Over residues 253–265 (REKGKEKDKDAKK) the composition is skewed to basic and acidic residues. The interval 253-274 (REKGKEKDKDAKKHNLGINNNN) is disordered. Position 305 is a phosphoserine (Ser-305). The span at 320-348 (KNYKNASGVVNSSPRSHSATNGSIPSSSS) shows a compositional bias: polar residues. The interval 320-375 (KNYKNASGVVNSSPRSHSATNGSIPSSSSKNEKKQKCTSKSPSTHKDLMENCIPNN) is disordered. N-linked (GlcNAc...) asparagine glycosylation is present at Asn-324. Ser-332 carries the post-translational modification Phosphoserine. Residues Asn-340 and Asn-452 are each glycosylated (N-linked (GlcNAc...) asparagine). The interval 630-664 (TSPLSPVSPHYSSKFVETSPSGLDPNASVYQPLKK) is disordered. Phosphoserine is present on residues Ser-631 and Ser-634. Asn-655 carries an N-linked (GlcNAc...) asparagine glycan.

The protein belongs to the macoilin family.

The protein resides in the rough endoplasmic reticulum membrane. It is found in the nucleus membrane. Its function is as follows. Plays a role in the regulation of neuronal activity. This chain is Macoilin (MACO1), found in Macaca mulatta (Rhesus macaque).